Reading from the N-terminus, the 414-residue chain is Gamma-glutamyl phosphate reductase (414 aa).

The protein belongs to the gamma-glutamyl phosphate reductase family.

The protein resides in the cytoplasm. It carries out the reaction L-glutamate 5-semialdehyde + phosphate + NADP(+) = L-glutamyl 5-phosphate + NADPH + H(+). It functions in the pathway amino-acid biosynthesis; L-proline biosynthesis; L-glutamate 5-semialdehyde from L-glutamate: step 2/2. In terms of biological role, catalyzes the NADPH-dependent reduction of L-glutamate 5-phosphate into L-glutamate 5-semialdehyde and phosphate. The product spontaneously undergoes cyclization to form 1-pyrroline-5-carboxylate. The polypeptide is Gamma-glutamyl phosphate reductase (Francisella philomiragia subsp. philomiragia (strain ATCC 25017 / CCUG 19701 / FSC 153 / O#319-036)).